The following is a 308-amino-acid chain: Porphobilinogen deaminase (308 aa).

Cys241 bears the S-(dipyrrolylmethanemethyl)cysteine mark.

The protein belongs to the HMBS family. Monomer. Requires dipyrromethane as cofactor.

The enzyme catalyses 4 porphobilinogen + H2O = hydroxymethylbilane + 4 NH4(+). It functions in the pathway porphyrin-containing compound metabolism; protoporphyrin-IX biosynthesis; coproporphyrinogen-III from 5-aminolevulinate: step 2/4. Functionally, tetrapolymerization of the monopyrrole PBG into the hydroxymethylbilane pre-uroporphyrinogen in several discrete steps. This chain is Porphobilinogen deaminase, found in Staphylococcus aureus (strain MSSA476).